The sequence spans 296 residues: MALAPELSRQTKLKEVAGIPLQAPTVDNWSQIQTFKAKPDDLLICTYPKSGTTWIQEIVDMIEQNGDVEKCQRTIIQHRHPFIEWARPPQPSGVDKANAMPAPRILRTHLPTQLLPPSFWTNNCKFLYVARNAKDCMVSYYHFYRMSQVLPDPGTWNEYFETFINGKVSWGSWFDHVKGWWEIRDRYQILFLFYEDMKRDPKREIQKVMQFMGKNLDEEVVDKIVLETSFEKMKENPMTNRSTVPKSVLDQSISPFMRKGTVGDWKNHFTVAQNDRFDEIYKQKMGGTSLNFCMEL.

A 3'-phosphoadenylyl sulfate-binding site is contributed by 49–54 (KSGTTW). 107 to 109 (RTH) provides a ligand contact to substrate. H109 serves as the catalytic Proton acceptor. 3'-phosphoadenylyl sulfate is bound by residues R131, S139, Y194, and 228-233 (TSFEKM). S139 carries the phosphoserine modification. Phosphoserine is present on S254. Position 256–260 (256–260 (FMRKG)) interacts with 3'-phosphoadenylyl sulfate.

Belongs to the sulfotransferase 1 family. Highly expressed in kidney and at lower levels in stomach and liver. More specifically found in the epithelia of proximal tubules of the kidney, of the bile duct, of the gastric mucosa, and in hepatocytes.

The protein resides in the cytoplasm. It localises to the lysosome. It is found in the mitochondrion. It catalyses the reaction a phenol + 3'-phosphoadenylyl sulfate = an aryl sulfate + adenosine 3',5'-bisphosphate + H(+). The enzyme catalyses cholesterol + 3'-phosphoadenylyl sulfate = cholesterol sulfate + adenosine 3',5'-bisphosphate + H(+). Functionally, sulfotransferase that utilizes 3'-phospho-5'-adenylyl sulfate (PAPS) to catalyze the sulfate conjugation of phenolic compounds. Does not transfer sulfate to steroids, dopamine, acetaminophen, or alpha-naphthol. Except in mitochondria, where it can add sulfate to cholesterol producing cholesterol sulfate, which alters mitochondrial membrane organization, and impacts protein complex mobility increasing state-III respiration, thereby modulating mitochondrial respiration. Catalyzes the sulfation of the carcinogenic N-hydroxy-2-acetylaminofluorene leading to highly reactive intermediates capable of forming DNA adducts, potentially resulting in mutagenesis. This Rattus norvegicus (Rat) protein is Sulfotransferase 1C2 (Sult1c2).